The sequence spans 253 residues: MLKTRIIPCLDVADGRVVKGVNFVDLRDAGDPVEAARAYDAAGADELCFLDIHATHENRGTMYDLVTRTAEQCFMPLTVGGGVRTQQDVRALLLAGADKVSFNSAAVADPNVVAEAADRFGSQCIVVAIDAKTVAPGRWEIFTHGGRRATGIDAVEFAQDVAAKGAGEILLTSMDRDGTRSGFNLPLTRAISDAVRIPVIASGGVGTLDHLVEGVTEGGASAVLAASIFHFGEFTIGEAKAHMAAAGIPVRLA.

Catalysis depends on residues Asp-11 and Asp-130.

It belongs to the HisA/HisF family. In terms of assembly, heterodimer of HisH and HisF.

It is found in the cytoplasm. The catalysed reaction is 5-[(5-phospho-1-deoxy-D-ribulos-1-ylimino)methylamino]-1-(5-phospho-beta-D-ribosyl)imidazole-4-carboxamide + L-glutamine = D-erythro-1-(imidazol-4-yl)glycerol 3-phosphate + 5-amino-1-(5-phospho-beta-D-ribosyl)imidazole-4-carboxamide + L-glutamate + H(+). It functions in the pathway amino-acid biosynthesis; L-histidine biosynthesis; L-histidine from 5-phospho-alpha-D-ribose 1-diphosphate: step 5/9. Its function is as follows. IGPS catalyzes the conversion of PRFAR and glutamine to IGP, AICAR and glutamate. The HisF subunit catalyzes the cyclization activity that produces IGP and AICAR from PRFAR using the ammonia provided by the HisH subunit. This is Imidazole glycerol phosphate synthase subunit HisF from Cereibacter sphaeroides (strain ATCC 17025 / ATH 2.4.3) (Rhodobacter sphaeroides).